Reading from the N-terminus, the 398-residue chain is Argininosuccinate synthase (398 aa).

Position 8 to 16 (A8 to S16) interacts with ATP. Y87 provides a ligand contact to L-citrulline. G117 lines the ATP pocket. Positions 119, 123, and 124 each coordinate L-aspartate. L-citrulline is bound at residue N123. 4 residues coordinate L-citrulline: R127, S175, E259, and Y271.

This sequence belongs to the argininosuccinate synthase family. Type 1 subfamily. Homotetramer.

The protein localises to the cytoplasm. It carries out the reaction L-citrulline + L-aspartate + ATP = 2-(N(omega)-L-arginino)succinate + AMP + diphosphate + H(+). It functions in the pathway amino-acid biosynthesis; L-arginine biosynthesis; L-arginine from L-ornithine and carbamoyl phosphate: step 2/3. The sequence is that of Argininosuccinate synthase from Corynebacterium kroppenstedtii (strain DSM 44385 / JCM 11950 / CIP 105744 / CCUG 35717).